A 454-amino-acid polypeptide reads, in one-letter code: Ribosomal protein uS12 methylthiotransferase RimO (454 aa).

The region spanning 14 to 125 is the MTTase N-terminal domain; sequence SKVAFSHVGC…IAKVLDRVEK (112 aa). [4Fe-4S] cluster-binding residues include C23, C59, C88, C163, C167, and C170. The 230-residue stretch at 149–378 folds into the Radical SAM core domain; sequence DKNKFVAYLR…ISVQQNISKD (230 aa). The TRAM domain maps to 381–452; the sequence is QSYVGSKMKI…EYDLYGETLK (72 aa).

The protein belongs to the methylthiotransferase family. RimO subfamily. The cofactor is [4Fe-4S] cluster.

The protein localises to the cytoplasm. The enzyme catalyses L-aspartate(89)-[ribosomal protein uS12]-hydrogen + (sulfur carrier)-SH + AH2 + 2 S-adenosyl-L-methionine = 3-methylsulfanyl-L-aspartate(89)-[ribosomal protein uS12]-hydrogen + (sulfur carrier)-H + 5'-deoxyadenosine + L-methionine + A + S-adenosyl-L-homocysteine + 2 H(+). In terms of biological role, catalyzes the methylthiolation of an aspartic acid residue of ribosomal protein uS12. The protein is Ribosomal protein uS12 methylthiotransferase RimO of Prochlorococcus marinus (strain MIT 9215).